We begin with the raw amino-acid sequence, 93 residues long: ATP-dependent Clp protease adapter protein ClpS (93 aa).

The protein belongs to the ClpS family. In terms of assembly, binds to the N-terminal domain of the chaperone ClpA.

Functionally, involved in the modulation of the specificity of the ClpAP-mediated ATP-dependent protein degradation. This Gloeobacter violaceus (strain ATCC 29082 / PCC 7421) protein is ATP-dependent Clp protease adapter protein ClpS.